The primary structure comprises 341 residues: UDP-3-O-acylglucosamine N-acyltransferase (341 aa).

The active-site Proton acceptor is the His237.

The protein belongs to the transferase hexapeptide repeat family. LpxD subfamily. As to quaternary structure, homotrimer.

It carries out the reaction a UDP-3-O-[(3R)-3-hydroxyacyl]-alpha-D-glucosamine + a (3R)-hydroxyacyl-[ACP] = a UDP-2-N,3-O-bis[(3R)-3-hydroxyacyl]-alpha-D-glucosamine + holo-[ACP] + H(+). It functions in the pathway bacterial outer membrane biogenesis; LPS lipid A biosynthesis. Its function is as follows. Catalyzes the N-acylation of UDP-3-O-acylglucosamine using 3-hydroxyacyl-ACP as the acyl donor. Is involved in the biosynthesis of lipid A, a phosphorylated glycolipid that anchors the lipopolysaccharide to the outer membrane of the cell. This Azoarcus sp. (strain BH72) protein is UDP-3-O-acylglucosamine N-acyltransferase.